The primary structure comprises 185 residues: Ribosome-recycling factor (185 aa).

This sequence belongs to the RRF family.

Its subcellular location is the cytoplasm. Responsible for the release of ribosomes from messenger RNA at the termination of protein biosynthesis. May increase the efficiency of translation by recycling ribosomes from one round of translation to another. This is Ribosome-recycling factor from Helicobacter pylori (strain Shi470).